The sequence spans 396 residues: Acetylornithine aminotransferase 2 (396 aa).

Pyridoxal 5'-phosphate is bound by residues 102–103 (GA) and Phe134. A N(2)-acetyl-L-ornithine-binding site is contributed by Arg137. Pyridoxal 5'-phosphate is bound at residue 219-222 (DEVQ). Lys248 is subject to N6-(pyridoxal phosphate)lysine. Pyridoxal 5'-phosphate is bound at residue Thr276.

It belongs to the class-III pyridoxal-phosphate-dependent aminotransferase family. ArgD subfamily. In terms of assembly, homodimer. It depends on pyridoxal 5'-phosphate as a cofactor.

It is found in the cytoplasm. The catalysed reaction is N(2)-acetyl-L-ornithine + 2-oxoglutarate = N-acetyl-L-glutamate 5-semialdehyde + L-glutamate. The protein operates within amino-acid biosynthesis; L-arginine biosynthesis; N(2)-acetyl-L-ornithine from L-glutamate: step 4/4. This is Acetylornithine aminotransferase 2 from Bordetella pertussis (strain Tohama I / ATCC BAA-589 / NCTC 13251).